Here is a 100-residue protein sequence, read N- to C-terminus: Apolipoprotein C-II (100 aa).

Positions 1-25 are cleaved as a signal peptide; it reads MDARSLLLLWLLLPLLLLLGCEVQG. Residues 65–73 form a lipid binding region; sequence AVDETIRDI. The tract at residues 77–100 is lipoprotein lipase cofactor; it reads GSAAISTYTGILTDQILTMLQGKQ.

The protein belongs to the apolipoprotein C2 family. Post-translationally, proapolipoprotein C-II is synthesized as a sialic acid containing glycoprotein which is subsequently desialylated prior to its proteolytic processing. In terms of processing, proapolipoprotein C-II, the major form found in plasma undergoes proteolytic cleavage of its N-terminal hexapeptide to generate apolipoprotein C-II, which occurs as the minor form in plasma. Liver.

The protein resides in the secreted. Component of chylomicrons, very low-density lipoproteins (VLDL), low-density lipoproteins (LDL), and high-density lipoproteins (HDL) in plasma. Plays an important role in lipoprotein metabolism as an activator of lipoprotein lipase. Both proapolipoprotein C-II and apolipoprotein C-II can activate lipoprotein lipase. The polypeptide is Apolipoprotein C-II (APOC2) (Cavia porcellus (Guinea pig)).